The primary structure comprises 349 residues: Glycosyltransferase 8 domain-containing protein 2 (349 aa).

Topologically, residues 1 to 6 (MAFLRK) are cytoplasmic. A helical; Signal-anchor for type II membrane protein membrane pass occupies residues 7 to 24 (VNQVLLLLLVLTLCGILY). Residues 25 to 349 (KKVHKGAVLK…AGIFKLHHNR (325 aa)) lie on the Lumenal side of the membrane. Asn234 carries an N-linked (GlcNAc...) asparagine glycan.

It belongs to the glycosyltransferase 8 family.

It is found in the membrane. This Mus musculus (Mouse) protein is Glycosyltransferase 8 domain-containing protein 2 (Glt8d2).